The sequence spans 1614 residues: Low-density lipoprotein receptor-related protein 5 (1614 aa).

The N-terminal stretch at 1–30 (METAPTRAPPPPPPPLLLLVLYCSLVPAAA) is a signal peptide. A beta-propeller 1 region spans residues 31–287 (SPLLLFANRR…YSPMDIQVLS (257 aa)). Topologically, residues 31-1383 (SPLLLFANRR…PPSDDIPAHS (1353 aa)) are extracellular. LDL-receptor class B repeat units lie at residues 74–118 (GAVY…DWVG), 119–161 (KKLY…DPAH), 162–205 (GYMY…DLEE), 206–246 (QKLY…TLSG), and 247–289 (DTLY…LSQE). N-linked (GlcNAc...) asparagine glycosylation is found at N92 and N137. Residues 294 to 336 (FHTPCEEDNGGCSHLCLLSPREPFYSCACPTGVQLQDNGKTCK) form the EGF-like 1 domain. Intrachain disulfides connect C298–C309, C305–C320, and C322–C335. Residues 340-601 (EEVLLLARRT…AVNVAKVVGT (262 aa)) form a beta-propeller 2 region. LDL-receptor class B repeat units follow at residues 384–426 (GYVY…DWVA), 427–469 (RNLY…HPVM), 470–513 (GLMY…DLQE), 514–556 (GKLY…LGDF), and 557–599 (IYWT…AKVV). N445 and N498 each carry an N-linked (GlcNAc...) asparagine glycan. Residues 600–640 (GTNPCADGNGGCSHLCFFTPRATKCGCPIGLELLSDMKTCI) enclose the EGF-like 2 domain. Cystine bridges form between C604/C615, C611/C624, and C626/C639. A beta-propeller 3 region spans residues 643-902 (EAFLVFTSRA…VFHSSRQDGL (260 aa)). LDL-receptor class B repeat units lie at residues 686-728 (NHIY…DWMG), 729-771 (KNLY…DPTK), 772-814 (GYIY…DYAD), 815-854 (QRLYWTDLDTNMIESSNMLGQERMVIADDLPYPFGLTQYS), and 855-897 (DYIY…FHSS). Residue N704 is glycosylated (N-linked (GlcNAc...) asparagine). N877 carries N-linked (GlcNAc...) asparagine glycosylation. The EGF-like 3 domain maps to 901–941 (GLNDCVHSNGQCGQLCLAIPGGHRCGCASHYTLDPSSRNCS). 3 cysteine pairs are disulfide-bonded: C905–C916, C912–C925, and C927–C940. Residues 944–1211 (STFLLFSQKF…AVEEVSLEEF (268 aa)) are beta-propeller 4. LDL-receptor class B repeat units follow at residues 988–1034 (KFIY…DIYS), 1035–1077 (RTLF…NAER), 1078–1122 (GYMY…DNAL), 1123–1164 (GKLF…VLGR), and 1165–1206 (HLYW…VEEV). The interval 1002–1025 (AKDDGTQPSMLTSPSQSLSPDRQP) is disordered. A compositionally biased stretch (polar residues) spans 1007–1021 (TQPSMLTSPSQSLSP). In terms of domain architecture, EGF-like 4 spans 1212–1253 (SAHPCARDNGGCSHICIAKGDGTPRCSCPVHLVLLQNLLTCG). Intrachain disulfides connect C1216–C1227, C1223–C1237, C1239–C1252, C1258–C1272, C1265–C1285, C1279–C1294, C1297–C1309, C1304–C1322, C1316–C1331, C1335–C1347, C1342–C1360, and C1354–C1369. LDL-receptor class A domains are found at residues 1257-1295 (TCSPDQFACTTGEIDCIPGAWRCDGFPECADQSDEEGCP), 1296-1332 (VCSASQFPCARGQCVDLRLRCDGEADCQDRSDEANCD), and 1334-1370 (VCLPNQFRCTSGQCVLIKQQCDSFPDCADGSDELMCE). The helical transmembrane segment at 1384-1406 (SAIGPVIGIILSLFVMGGVYFVC) threads the bilayer. Over 1407-1614 (QRVMCQRYTG…PPPSPCTDSS (208 aa)) the chain is Cytoplasmic. Positions 1474 to 1498 (RNHVTGASSSSSSSTKATLYPPILN) are disordered. The PPPSP motif A signature appears at 1499–1505 (PPPSPAT). The PPPSP motif B motif lies at 1537-1544 (PPTTPCST). Positions 1567-1599 (SDSDPYPPPPTPHSQYLSAEDSCPPSPGTERSY) are disordered. Residues 1573–1580 (PPPPTPHS) carry the PPPSP motif C motif. A PPPSP motif D motif is present at residues 1590–1595 (PPSPGT). Residues 1604–1611 (PPPPSPCT) carry the PPPSP motif E motif.

Belongs to the LDLR family. Homodimer; disulfide-linked. Forms phosphorylated oligomer aggregates on Wnt-signaling. Component of a WNT-signaling complex that contains a WNT protein, a FZD protein and LRP5 or LRP6. Interacts with FZD8; the interaction is formed on WNT-binding and signaling. Interacts (via the phosphorylated PPPSP motif domains) with AXIN1; the interaction prevents inhibition of beta-catenin phosphorylation and signaling and is enhanced in the presence of GSK3B and WNT1 or WNT3A. Interacts (via beta-propeller regions 3 and 4) with DKK1; the interaction, enhanced by MESD and/or KREMEN, inhibits beta-catenin signaling by preventing GSK3-mediated phosphorylation of the PPPSP motifs and subsequent, AXIN1 binding. Interacts with CSNK1E. Interacts with SOST; the interaction antagonizes canonical Wnt signaling. Interacts with APCDD1. Interacts with MESD; the interaction prevents the formation of LRP5 aggregates, targets LRP5 to the plasma membrane and, when complexed with KREMEN2, increases DKK1 binding. Interacts with CAPRIN2. Phosphorylation of cytoplasmic PPPSP motifs regulates the signal transduction of the Wnt signaling pathway through acting as a docking site for AXIN1. In terms of tissue distribution, widely expressed, with the highest expression levels in liver, heart, and lung and the lowest levels in brain and spleen.

The protein localises to the membrane. Its subcellular location is the endoplasmic reticulum. Functionally, acts as a coreceptor with members of the frizzled family of seven-transmembrane spanning receptors to transduce signal by Wnt proteins. Activates the canonical Wnt signaling pathway that controls cell fate determination and self-renewal during embryonic development and adult tissue regeneration. In particular, may play an important role in the development of the posterior patterning of the epiblast during gastrulation. During bone development, regulates osteoblast proliferation and differentiation thus determining bone mass. Mechanistically, the formation of the signaling complex between Wnt ligand, frizzled receptor and LRP5 coreceptor promotes the recruitment of AXIN1 to LRP5, stabilizing beta-catenin/CTNNB1 and activating TCF/LEF-mediated transcriptional programs. Acts as a coreceptor for non-Wnt proteins, such as norrin/NDP. Binding of norrin/NDP to frizzled 4/FZD4-LRP5 receptor complex triggers beta-catenin/CTNNB1-dependent signaling known to be required for retinal vascular development. Plays a role in controlling postnatal vascular regression in retina via macrophage-induced endothelial cell apoptosis. The chain is Low-density lipoprotein receptor-related protein 5 from Mus musculus (Mouse).